A 226-amino-acid chain; its full sequence is Transcriptional regulatory protein CitT (226 aa).

Residues 3-119 (HIAIAEDDFR…KFRQVLLQYK (117 aa)) form the Response regulatory domain. Aspartate 54 bears the 4-aspartylphosphate mark. The H-T-H motif DNA-binding region spans 178–197 (AEELGEKMGASRTTARRYAE).

Post-translationally, phosphorylated by CitS.

It localises to the cytoplasm. In terms of biological role, member of the two-component regulatory system CitT/CitS. Regulates the expression of the citM-yflN operon. Phosphorylated CitT binds to the citM promoter to activate the transcription of the citM-yflN operon. The polypeptide is Transcriptional regulatory protein CitT (citT) (Bacillus subtilis (strain 168)).